Consider the following 549-residue polypeptide: Zinc finger protein 266 (549 aa).

Residues 1 to 42 (MLENYKNLATVGYQLFKPSLISWLEQEESRTVQRGDFQASEW) enclose the KRAB domain. The C2H2-type 1; degenerate zinc-finger motif lies at 156–178 (FDCSDSGKSFINHSHLQGHLRTH). A C2H2-type 2; degenerate zinc finger spans residues 184–206 (HEWKECGRGFIHSTDLAVRIQTH). C2H2-type zinc fingers lie at residues 212 to 234 (YKCKECGKGFRYSAYLNIHMGTH), 240 to 262 (YECKECGKAFTRSCQLTQHRKTH), 268 to 290 (YKCKDCGRAFTVSSCLSQHMKIH), 296 to 318 (YECKECGIAFTRSSQLTEHLKTH), 324 to 346 (FECKICGKSFRNSSCLSDHFRIH), 352 to 374 (YKCKDCGKAFTQNSDLTKHARTH), 380 to 402 (YECKECGKAFARSSRLSEHTRTH), 408 to 430 (FECVKCGKAFAISSNLSGHLRIH), 436 to 458 (FECLECGKAFTHSSSLNNHMRTH), 464 to 486 (FTCMECGKAFKFPTCVNLHMRIH), 492 to 514 (YKCKQCGKSFSYSNSFQLHERTH), and 520 to 542 (YECKECGKAFSSSSSFRNHERRH). Residues 530–549 (SSSSSFRNHERRHADERLSA) form a disordered region.

This sequence belongs to the krueppel C2H2-type zinc-finger protein family.

It is found in the nucleus. May be involved in transcriptional regulation. The polypeptide is Zinc finger protein 266 (ZNF266) (Homo sapiens (Human)).